The chain runs to 296 residues: Farnesyl diphosphate synthase (296 aa).

3 residues coordinate isopentenyl diphosphate: K46, R49, and H78. Mg(2+)-binding residues include D85 and D91. R96 contributes to the (2E)-geranyl diphosphate binding site. Isopentenyl diphosphate is bound at residue R97. (2E)-geranyl diphosphate contacts are provided by K182, T183, Q220, and K237.

This sequence belongs to the FPP/GGPP synthase family. Mg(2+) is required as a cofactor.

It localises to the cytoplasm. The enzyme catalyses isopentenyl diphosphate + (2E)-geranyl diphosphate = (2E,6E)-farnesyl diphosphate + diphosphate. The sequence is that of Farnesyl diphosphate synthase (ispA) from Bacillus subtilis (strain 168).